Here is a 78-residue protein sequence, read N- to C-terminus: MGGISIWQLLIIAVIVVLLFGTKKLRGIGSDLGGAIKGFKKAMNEEESEKKDADFEPKSLEQQSKQAATESKKDKEQA.

Residues 1-21 (MGGISIWQLLIIAVIVVLLFG) form a helical membrane-spanning segment. Positions 47–59 (ESEKKDADFEPKS) are enriched in basic and acidic residues. Residues 47–78 (ESEKKDADFEPKSLEQQSKQAATESKKDKEQA) are disordered. Residues 60–69 (LEQQSKQAAT) show a composition bias toward polar residues.

Belongs to the TatA/E family. The Tat system comprises two distinct complexes: a TatABC complex, containing multiple copies of TatA, TatB and TatC subunits, and a separate TatA complex, containing only TatA subunits. Substrates initially bind to the TatABC complex, which probably triggers association of the separate TatA complex to form the active translocon.

The protein localises to the cell inner membrane. Functionally, part of the twin-arginine translocation (Tat) system that transports large folded proteins containing a characteristic twin-arginine motif in their signal peptide across membranes. TatA could form the protein-conducting channel of the Tat system. The chain is Sec-independent protein translocase protein TatA from Vibrio vulnificus (strain CMCP6).